We begin with the raw amino-acid sequence, 438 residues long: Alkylcitrate synthase tstJ (438 aa).

Residues His-309 and Asp-365 contribute to the active site.

The protein belongs to the citrate synthase family.

It catalyses the reaction (2E,10E)-dode-2,10-dicenoyl-CoA + oxaloacetate + H2O = (4E,11E)-2-hydroxytrideca-4,11-dien-1,2,3-tricarboxylate + CoA + H(+). It participates in secondary metabolite biosynthesis. Its function is as follows. Alkylcitrate synthase; part of the gene cluster that mediates the biosynthesis of the antihypercholesterolemic agents phomoidrides which are dimeric anhydrides. Within the pathway, the alkylcitrate synthase (ACS) tstJ and the alkylcitrate dehydratase (ACDH) tstI produce the decarboxylated monomeric anhydrides by coupling the C12-fatty acyl product from phiA with oxalacetic acid. The pathway begins with the highly reducing polyketide synthase tstA that catalyzes the formation of a C12-fatty acyl-ACP, starting from one acetate and 5 malonate units. The hydrolase tstM is involved in the release of the C12-fatty acyl chain from phiA. The alkylcitrate synthase (ACS) tstJ and the alkylcitrate dehydratase (ACDH) tstI then give rise to decarboxylated monomeric anhydrides by coupling the C12-fatty acyl chain with oxalacetic acid. The cyclase tstC is responsible for the dimerization of the monomeric anhydrides which leads to the production of prephomoidride that contains the characteristic bicyclo[4.3.1]deca-1,6-diene system of phomoidrides. Iterative oxidation catalyzed by the alpha-ketoglutarate-dependent dioxygenase tstK produced then phomoidride A. Finally, the methyltransferase tstE converts phomoidride A to phomoidride B via an acetalization reaction. The phosphatidylethanolamine-binding protein tstB and tstN are not essential for dimerization and their functions have still to be determined. This is Alkylcitrate synthase tstJ from Talaromyces stipitatus (strain ATCC 10500 / CBS 375.48 / QM 6759 / NRRL 1006) (Penicillium stipitatum).